Consider the following 167-residue polypeptide: Protein-export protein SecB (167 aa).

Belongs to the SecB family. In terms of assembly, homotetramer, a dimer of dimers. One homotetramer interacts with 1 SecA dimer.

It is found in the cytoplasm. Functionally, one of the proteins required for the normal export of preproteins out of the cell cytoplasm. It is a molecular chaperone that binds to a subset of precursor proteins, maintaining them in a translocation-competent state. It also specifically binds to its receptor SecA. In Wolbachia pipientis subsp. Culex pipiens (strain wPip), this protein is Protein-export protein SecB.